We begin with the raw amino-acid sequence, 678 residues long: Chloride channel protein ClC-Kb (678 aa).

The Cytoplasmic segment spans residues 1 to 50 (MEELVGLREGSSGNPVALRELWSPCPRLRRGIRGGLEWLKQKLFRVGEDW). A run of 2 helical transmembrane segments spans residues 51–82 (YFLM…KWLY) and 91–111 (LRYL…SGFS). The helical intramembrane region spans 116-127 (PFSGGSGIPELK). Ser-121 contributes to the chloride binding site. 2 consecutive transmembrane segments (helical) span residues 141 to 160 (IKNF…TGST) and 161 to 180 (LFLG…AAYL). Positions 203-224 (AGAAVGVATVFAAPFSGVLFCI) form an intramembrane region, helical. The chain crosses the membrane as a helical span at residues 236–255 (YWRGFFAATCGAFMFRLLAV). Glu-259, Glu-261, Asp-278, and Glu-281 together coordinate Ca(2+). Helical transmembrane passes span 282–310 (IFFF…LAFT) and 325–342 (PLYA…TYPP). The segment at residues 349–360 (ASRLSMREHLDT) is an intramembrane region (helical). An N-linked (GlcNAc...) asparagine glycan is attached at Asn-364. The next 2 helical transmembrane spans lie at 400–420 (GTLA…TTIP) and 421–440 (MPAG…GRLL). Phe-426 is a binding site for chloride. Residues 464–496 (GGYALAGAAAFSGAVTHSISTALLAFELTGQIV) constitute an intramembrane region (helical). Residues 500-520 (PVLMAVLAANAIAQSCQPSFY) traverse the membrane as a helical segment. Residues 521-678 (DGTIMVKKLP…SWVERQHTGF (158 aa)) are Cytoplasmic-facing. CBS domains follow at residues 551-612 (MRRA…ARAS) and 620-678 (DILA…HTGF).

This sequence belongs to the chloride channel (TC 2.A.49) family. CLCNKB subfamily. In terms of assembly, homodimer. Interacts with BSND. Post-translationally, N-glycosylated. As to expression, expressed predominantly in the kidney.

It is found in the basolateral cell membrane. The enzyme catalyses chloride(in) = chloride(out). It carries out the reaction iodide(out) = iodide(in). It catalyses the reaction nitrate(in) = nitrate(out). The catalysed reaction is bromide(in) = bromide(out). Anion-selective channel permeable to small monovalent anions with ion selectivity for chloride &gt; bromide &gt; nitrate &gt; iodide. Forms a homodimeric channel where each subunit has its own ion conduction pathway. May conduct double-barreled currents controlled by two types of gates, two fast gates that control each subunit independently and a slow common gate that opens and shuts off both subunits simultaneously. Assembles with the regulatory subunit BSND/Barttin for sorting at the basolateral plasma membrane domain and functional switch to the ion conducting state. CLCNKB:BSND channels display mostly a linear current-voltage relationship controlled by common gate. Mediates chloride conductance along nephron segments, namely the thick ascending limb of Henle's loop, convoluted tubule and the collecting duct, contributing to the maintenance of systemic acid-base and electrolyte homeostasis. Conducts chloride currents in the stria vascularis of the inner ear to establish the endocochlear potential necessary for normal hearing. The polypeptide is Chloride channel protein ClC-Kb (CLCNKB) (Oryctolagus cuniculus (Rabbit)).